A 290-amino-acid chain; its full sequence is Phosphatidylserine decarboxylase proenzyme (290 aa).

Active-site charge relay system; for autoendoproteolytic cleavage activity residues include D96, H153, and S257. The Schiff-base intermediate with substrate; via pyruvic acid; for decarboxylase activity role is filled by S257. Pyruvic acid (Ser); by autocatalysis is present on S257.

It belongs to the phosphatidylserine decarboxylase family. PSD-B subfamily. Prokaryotic type I sub-subfamily. As to quaternary structure, heterodimer of a large membrane-associated beta subunit and a small pyruvoyl-containing alpha subunit. Pyruvate serves as cofactor. In terms of processing, is synthesized initially as an inactive proenzyme. Formation of the active enzyme involves a self-maturation process in which the active site pyruvoyl group is generated from an internal serine residue via an autocatalytic post-translational modification. Two non-identical subunits are generated from the proenzyme in this reaction, and the pyruvate is formed at the N-terminus of the alpha chain, which is derived from the carboxyl end of the proenzyme. The autoendoproteolytic cleavage occurs by a canonical serine protease mechanism, in which the side chain hydroxyl group of the serine supplies its oxygen atom to form the C-terminus of the beta chain, while the remainder of the serine residue undergoes an oxidative deamination to produce ammonia and the pyruvoyl prosthetic group on the alpha chain. During this reaction, the Ser that is part of the protease active site of the proenzyme becomes the pyruvoyl prosthetic group, which constitutes an essential element of the active site of the mature decarboxylase.

The protein localises to the cell membrane. It carries out the reaction a 1,2-diacyl-sn-glycero-3-phospho-L-serine + H(+) = a 1,2-diacyl-sn-glycero-3-phosphoethanolamine + CO2. It functions in the pathway phospholipid metabolism; phosphatidylethanolamine biosynthesis; phosphatidylethanolamine from CDP-diacylglycerol: step 2/2. Its function is as follows. Catalyzes the formation of phosphatidylethanolamine (PtdEtn) from phosphatidylserine (PtdSer). This chain is Phosphatidylserine decarboxylase proenzyme, found in Haemophilus influenzae (strain ATCC 51907 / DSM 11121 / KW20 / Rd).